The chain runs to 69 residues: Putative membrane protein insertion efficiency factor (69 aa).

Belongs to the UPF0161 family.

It localises to the cell membrane. In terms of biological role, could be involved in insertion of integral membrane proteins into the membrane. This chain is Putative membrane protein insertion efficiency factor, found in Clostridium botulinum (strain Kyoto / Type A2).